We begin with the raw amino-acid sequence, 211 residues long: Probable metallo-hydrolase YqgX (211 aa).

Zn(2+)-binding residues include His-54, His-56, Asp-58, His-59, His-130, Asp-149, and His-190.

Belongs to the metallo-beta-lactamase superfamily. Glyoxalase II family. Requires Zn(2+) as cofactor.

This Bacillus subtilis (strain 168) protein is Probable metallo-hydrolase YqgX (yqgX).